The sequence spans 225 residues: Ribonuclease 3 (225 aa).

The RNase III domain maps to 5-127 (IDKLERKLGY…IIGAIYLDSD (123 aa)). Glutamate 40 contacts Mg(2+). The active site involves aspartate 44. Residues aspartate 113 and glutamate 116 each coordinate Mg(2+). Glutamate 116 is an active-site residue. Residues 154–224 (DPKTRLQEFL…AETALEQLTN (71 aa)) enclose the DRBM domain.

This sequence belongs to the ribonuclease III family. As to quaternary structure, homodimer. The cofactor is Mg(2+).

It localises to the cytoplasm. It catalyses the reaction Endonucleolytic cleavage to 5'-phosphomonoester.. Functionally, digests double-stranded RNA. Involved in the processing of primary rRNA transcript to yield the immediate precursors to the large and small rRNAs (23S and 16S). Processes some mRNAs, and tRNAs when they are encoded in the rRNA operon. Processes pre-crRNA and tracrRNA of type II CRISPR loci if present in the organism. This is Ribonuclease 3 from Vibrio campbellii (strain ATCC BAA-1116).